The primary structure comprises 769 residues: Wall-associated receptor kinase-like 10 (769 aa).

An N-terminal signal peptide occupies residues 1–24 (MSSNCSCSLLSLFSLLLIIDLTVA). The Extracellular portion of the chain corresponds to 25 to 358 (SSCPKTCGGI…YTCEYTNHRP (334 aa)). N-linked (GlcNAc...) asparagine glycans are attached at residues N58, N114, N134, N182, N187, N237, N262, and N296. Positions 291–351 (CLCDYNSTTT…CVNLLGGYTC (61 aa)) are atypical EGF-like. Disulfide bonds link C293–C305, C327–C342, and C337–C351. A helical membrane pass occupies residues 359 to 379 (LVIGLSTSFSTLVFIGGIYWL). The Cytoplasmic segment spans residues 380 to 769 (YKFIRRQRRL…RSDVEPLFPR (390 aa)). One can recognise a Protein kinase domain in the interval 433 to 718 (FSLTRILGEG…SYSEDMQPYE (286 aa)). ATP-binding positions include 439–447 (LGEGGQGTV) and K461. Phosphotyrosine is present on Y506. The active-site Proton acceptor is D559. T593 and T598 each carry phosphothreonine. Phosphotyrosine is present on Y606.

It belongs to the protein kinase superfamily. Ser/Thr protein kinase family.

Its subcellular location is the membrane. The enzyme catalyses L-seryl-[protein] + ATP = O-phospho-L-seryl-[protein] + ADP + H(+). The catalysed reaction is L-threonyl-[protein] + ATP = O-phospho-L-threonyl-[protein] + ADP + H(+). Its function is as follows. Serine/threonine-protein kinase that may function as a signaling receptor of extracellular matrix component. The polypeptide is Wall-associated receptor kinase-like 10 (WAKL10) (Arabidopsis thaliana (Mouse-ear cress)).